A 227-amino-acid polypeptide reads, in one-letter code: Cytochrome c oxidase subunit 2 (227 aa).

At 1–14 (MAYPVQLGFQDAAS) the chain is on the mitochondrial intermembrane side. Residues 15–45 (PIMEELLYFHDHTLMIMFLISSLVLYIISLM) form a helical membrane-spanning segment. Residues 46–59 (LTTELMHTNTMDAQ) lie on the Mitochondrial matrix side of the membrane. A helical transmembrane segment spans residues 60–87 (EVETVWTILPAAILILIALPSLRILYMM). Residues 88-227 (DEITTPSLTL…HFEEWLLSML (140 aa)) are Mitochondrial intermembrane-facing. Cu cation contacts are provided by His-161, Cys-196, Glu-198, Cys-200, His-204, and Met-207. Glu-198 provides a ligand contact to Mg(2+).

Belongs to the cytochrome c oxidase subunit 2 family. As to quaternary structure, component of the cytochrome c oxidase (complex IV, CIV), a multisubunit enzyme composed of 14 subunits. The complex is composed of a catalytic core of 3 subunits MT-CO1, MT-CO2 and MT-CO3, encoded in the mitochondrial DNA, and 11 supernumerary subunits COX4I, COX5A, COX5B, COX6A, COX6B, COX6C, COX7A, COX7B, COX7C, COX8 and NDUFA4, which are encoded in the nuclear genome. The complex exists as a monomer or a dimer and forms supercomplexes (SCs) in the inner mitochondrial membrane with NADH-ubiquinone oxidoreductase (complex I, CI) and ubiquinol-cytochrome c oxidoreductase (cytochrome b-c1 complex, complex III, CIII), resulting in different assemblies (supercomplex SCI(1)III(2)IV(1) and megacomplex MCI(2)III(2)IV(2)). Found in a complex with TMEM177, COA6, COX18, COX20, SCO1 and SCO2. Interacts with TMEM177 in a COX20-dependent manner. Interacts with COX20. Interacts with COX16. Cu cation is required as a cofactor.

Its subcellular location is the mitochondrion inner membrane. The catalysed reaction is 4 Fe(II)-[cytochrome c] + O2 + 8 H(+)(in) = 4 Fe(III)-[cytochrome c] + 2 H2O + 4 H(+)(out). Component of the cytochrome c oxidase, the last enzyme in the mitochondrial electron transport chain which drives oxidative phosphorylation. The respiratory chain contains 3 multisubunit complexes succinate dehydrogenase (complex II, CII), ubiquinol-cytochrome c oxidoreductase (cytochrome b-c1 complex, complex III, CIII) and cytochrome c oxidase (complex IV, CIV), that cooperate to transfer electrons derived from NADH and succinate to molecular oxygen, creating an electrochemical gradient over the inner membrane that drives transmembrane transport and the ATP synthase. Cytochrome c oxidase is the component of the respiratory chain that catalyzes the reduction of oxygen to water. Electrons originating from reduced cytochrome c in the intermembrane space (IMS) are transferred via the dinuclear copper A center (CU(A)) of subunit 2 and heme A of subunit 1 to the active site in subunit 1, a binuclear center (BNC) formed by heme A3 and copper B (CU(B)). The BNC reduces molecular oxygen to 2 water molecules using 4 electrons from cytochrome c in the IMS and 4 protons from the mitochondrial matrix. The polypeptide is Cytochrome c oxidase subunit 2 (MT-CO2) (Hapalemur griseus (Gray gentle lemur)).